The primary structure comprises 284 residues: L-ribulose-5-phosphate 3-epimerase UlaE (284 aa).

It belongs to the L-ribulose-5-phosphate 3-epimerase family.

The enzyme catalyses L-ribulose 5-phosphate = L-xylulose 5-phosphate. Its pathway is cofactor degradation; L-ascorbate degradation; D-xylulose 5-phosphate from L-ascorbate: step 3/4. In terms of biological role, catalyzes the isomerization of L-xylulose-5-phosphate to L-ribulose-5-phosphate. Is involved in the anaerobic L-ascorbate utilization. This is L-ribulose-5-phosphate 3-epimerase UlaE from Salmonella paratyphi A (strain AKU_12601).